A 141-amino-acid polypeptide reads, in one-letter code: Large ribosomal subunit protein uL11 (141 aa).

Belongs to the universal ribosomal protein uL11 family. In terms of assembly, part of the ribosomal stalk of the 50S ribosomal subunit. Interacts with L10 and the large rRNA to form the base of the stalk. L10 forms an elongated spine to which L12 dimers bind in a sequential fashion forming a multimeric L10(L12)X complex. Post-translationally, one or more lysine residues are methylated.

Functionally, forms part of the ribosomal stalk which helps the ribosome interact with GTP-bound translation factors. The chain is Large ribosomal subunit protein uL11 from Listeria innocua serovar 6a (strain ATCC BAA-680 / CLIP 11262).